The sequence spans 335 residues: Phosphate acyltransferase (335 aa).

It belongs to the PlsX family. As to quaternary structure, homodimer. Probably interacts with PlsY.

Its subcellular location is the cytoplasm. It catalyses the reaction a fatty acyl-[ACP] + phosphate = an acyl phosphate + holo-[ACP]. The protein operates within lipid metabolism; phospholipid metabolism. Functionally, catalyzes the reversible formation of acyl-phosphate (acyl-PO(4)) from acyl-[acyl-carrier-protein] (acyl-ACP). This enzyme utilizes acyl-ACP as fatty acyl donor, but not acyl-CoA. The protein is Phosphate acyltransferase of Alkaliphilus oremlandii (strain OhILAs) (Clostridium oremlandii (strain OhILAs)).